The following is a 467-amino-acid chain: Ribulose bisphosphate carboxylase large chain (467 aa).

An N6,N6,N6-trimethyllysine modification is found at Lys5. Residues Asn114 and Thr164 each contribute to the substrate site. Residue Lys166 is the Proton acceptor of the active site. Residue Lys168 coordinates substrate. Positions 192, 194, and 195 each coordinate Mg(2+). Lys192 bears the N6-carboxylysine mark. His285 functions as the Proton acceptor in the catalytic mechanism. Substrate is bound by residues Arg286, His318, and Ser370.

The protein belongs to the RuBisCO large chain family. Type I subfamily. Heterohexadecamer of 8 large chains and 8 small chains; disulfide-linked. The disulfide link is formed within the large subunit homodimers. Mg(2+) serves as cofactor. The disulfide bond which can form in the large chain dimeric partners within the hexadecamer appears to be associated with oxidative stress and protein turnover.

Its subcellular location is the plastid. The protein localises to the chloroplast. The catalysed reaction is 2 (2R)-3-phosphoglycerate + 2 H(+) = D-ribulose 1,5-bisphosphate + CO2 + H2O. The enzyme catalyses D-ribulose 1,5-bisphosphate + O2 = 2-phosphoglycolate + (2R)-3-phosphoglycerate + 2 H(+). Functionally, ruBisCO catalyzes two reactions: the carboxylation of D-ribulose 1,5-bisphosphate, the primary event in carbon dioxide fixation, as well as the oxidative fragmentation of the pentose substrate in the photorespiration process. Both reactions occur simultaneously and in competition at the same active site. The protein is Ribulose bisphosphate carboxylase large chain of Tasmannia insipida (Pepperbush).